Consider the following 466-residue polypeptide: Ribulose bisphosphate carboxylase large chain (466 aa).

K4 bears the N6,N6,N6-trimethyllysine mark. Residues N113 and T163 each contribute to the substrate site. K165 serves as the catalytic Proton acceptor. Substrate is bound at residue K167. Mg(2+) is bound by residues K191, D193, and E194. K191 is modified (N6-carboxylysine). Residue H284 is the Proton acceptor of the active site. Positions 285, 317, and 369 each coordinate substrate.

This sequence belongs to the RuBisCO large chain family. Type I subfamily. Heterohexadecamer of 8 large chains and 8 small chains; disulfide-linked. The disulfide link is formed within the large subunit homodimers. Mg(2+) serves as cofactor. The disulfide bond which can form in the large chain dimeric partners within the hexadecamer appears to be associated with oxidative stress and protein turnover.

Its subcellular location is the plastid. The protein resides in the chloroplast. It carries out the reaction 2 (2R)-3-phosphoglycerate + 2 H(+) = D-ribulose 1,5-bisphosphate + CO2 + H2O. The catalysed reaction is D-ribulose 1,5-bisphosphate + O2 = 2-phosphoglycolate + (2R)-3-phosphoglycerate + 2 H(+). In terms of biological role, ruBisCO catalyzes two reactions: the carboxylation of D-ribulose 1,5-bisphosphate, the primary event in carbon dioxide fixation, as well as the oxidative fragmentation of the pentose substrate in the photorespiration process. Both reactions occur simultaneously and in competition at the same active site. The chain is Ribulose bisphosphate carboxylase large chain from Nelsonia canescens (Blue pussyleaf).